We begin with the raw amino-acid sequence, 434 residues long: Nicotinate phosphoribosyltransferase (434 aa).

Histidine 242 carries the post-translational modification Phosphohistidine; by autocatalysis.

The protein belongs to the NAPRTase family. Post-translationally, transiently phosphorylated on a His residue during the reaction cycle. Phosphorylation strongly increases the affinity for substrates and increases the rate of nicotinate D-ribonucleotide production. Dephosphorylation regenerates the low-affinity form of the enzyme, leading to product release.

The catalysed reaction is nicotinate + 5-phospho-alpha-D-ribose 1-diphosphate + ATP + H2O = nicotinate beta-D-ribonucleotide + ADP + phosphate + diphosphate. It functions in the pathway cofactor biosynthesis; NAD(+) biosynthesis; nicotinate D-ribonucleotide from nicotinate: step 1/1. Catalyzes the synthesis of beta-nicotinate D-ribonucleotide from nicotinate and 5-phospho-D-ribose 1-phosphate at the expense of ATP. This chain is Nicotinate phosphoribosyltransferase, found in Agrobacterium fabrum (strain C58 / ATCC 33970) (Agrobacterium tumefaciens (strain C58)).